The primary structure comprises 324 residues: Gamma-soluble NSF attachment protein (324 aa).

The span at 285-298 (NPTINSTAPQQQYS) shows a compositional bias: polar residues. A disordered region spans residues 285-324 (NPTINSTAPQQQYSNTTTTTTNNTNNNNPTSQQDDDEDVL). Over residues 299–312 (NTTTTTTNNTNNNN) the composition is skewed to low complexity.

It belongs to the SNAP family. Interacts with nsfA and probably SNARE proteins.

The protein resides in the cytoplasmic vesicle membrane. May be required for vesicular transport between the endoplasmic reticulum and the Golgi apparatus. Involved in vesicle fusion with nsfA and probably SNARE proteins. The polypeptide is Gamma-soluble NSF attachment protein (snpC) (Dictyostelium discoideum (Social amoeba)).